A 443-amino-acid polypeptide reads, in one-letter code: MNVKHGTFKGGIHPPYRKESTAEVPLGFGKKPEMVIIPMSLHIGAPCTPIVKKGDTVFLGQRVGEPNGFVSVPVHASVSGKVIAVEERPHASGDRVMSVVIESDGLDTIDPSIKPYGTLEDMDADAIKKMVLNAGIVGLGGATFPTHVKLAIPPDKKVDCVVLNGAECEPYLTADHHLMTSQAEKVVMGLKLAMKSVGVEKGFIGVEDNKTDAIEALVKAIGNDSRLEVYSLHTKYPQGAEKQLIAAITGREVPSGALPADAGVVVMNVGTAAQIAESMITGLPLYKRYLTCTGDAIKNPQTIEIRIGVPFQSVIDQCGGFSSEPGKVISGGPMMGVTQFVTDIPVMKGTSGILCLTKESAKIATPSNCIHCGKCVGVCPIHLQPLNIAEYSQRNMWDKCESNNAMDCIECGSCSYICPAKRTLVSSIRVAKREIIAQRRKGN.

2 4Fe-4S ferredoxin-type domains span residues 359 to 391 (ESAK…IAEY) and 398 to 428 (DKCE…VSSI). C369, C372, C375, C379, C408, C411, C414, and C418 together coordinate [4Fe-4S] cluster.

It belongs to the 4Fe4S bacterial-type ferredoxin family. RnfC subfamily. As to quaternary structure, the complex is composed of six subunits: RnfA, RnfB, RnfC, RnfD, RnfE and RnfG. Requires [4Fe-4S] cluster as cofactor.

The protein localises to the cell membrane. The catalysed reaction is 2 reduced [2Fe-2S]-[ferredoxin] + Na(+)(in) + NAD(+) + H(+) = 2 oxidized [2Fe-2S]-[ferredoxin] + Na(+)(out) + NADH. Its function is as follows. Part of a membrane-bound complex that couples electron transfer with translocation of ions across the membrane. Couples electron transfer from reduced ferredoxin to NAD(+) with electrogenic movement of Na(+) out of the cell. Involved in caffeate respiration. This chain is Na(+)-translocating ferredoxin:NAD(+) oxidoreductase complex subunit C, found in Acetobacterium woodii (strain ATCC 29683 / DSM 1030 / JCM 2381 / KCTC 1655 / WB1).